The following is a 45-amino-acid chain: Rubredoxin-1 (45 aa).

The residue at position 1 (Met-1) is an N-formylmethionine. Residues 1–45 enclose the Rubredoxin-like domain; that stretch reads MQKYVCNVCGYEYDPAEHDNVPFDQLPDDWCCPVCGVSKDQFSPA. Cys-6, Cys-9, Cys-32, and Cys-35 together coordinate Fe cation.

This sequence belongs to the rubredoxin family. It depends on Fe(3+) as a cofactor.

It is found in the cytoplasm. Its function is as follows. Rubredoxin is a small nonheme, iron protein lacking acid-labile sulfide. Its single Fe, chelated to 4 Cys, functions as an electron acceptor and may also stabilize the conformation of the molecule. In terms of biological role, electron acceptor for cytoplasmic lactate dehydrogenase. The polypeptide is Rubredoxin-1 (rd1) (Desulfovibrio desulfuricans (strain ATCC 27774 / DSM 6949 / MB)).